A 512-amino-acid chain; its full sequence is Apolipoprotein N-acyltransferase (512 aa).

A run of 6 helical transmembrane segments spans residues 5 to 25, 56 to 76, 92 to 112, 118 to 138, 168 to 188, and 195 to 215; these read LDKYWQHPALYWPLLILFAAA, FAVSSAYLFGLTAYTTQFYWI, VPLTFLLPAYLALYPALCFWL, LPRGIKIGLVLPILWTLTEFA, FGGIHMVTLATAFLGVWLVLA, and SGKRLLPIILIAALLAAGYTA. One can recognise a CN hydrolase domain in the interval 233–477; the sequence is LQGNIDQTLK…ETVLEGHIKG (245 aa). Glu271 functions as the Proton acceptor in the catalytic mechanism. Lys337 is an active-site residue. Cys389 (nucleophile) is an active-site residue. A helical transmembrane segment spans residues 487-507; sequence TGSSWWLMGILTLAALILFIF.

Belongs to the CN hydrolase family. Apolipoprotein N-acyltransferase subfamily.

Its subcellular location is the cell inner membrane. It carries out the reaction N-terminal S-1,2-diacyl-sn-glyceryl-L-cysteinyl-[lipoprotein] + a glycerophospholipid = N-acyl-S-1,2-diacyl-sn-glyceryl-L-cysteinyl-[lipoprotein] + a 2-acyl-sn-glycero-3-phospholipid + H(+). The protein operates within protein modification; lipoprotein biosynthesis (N-acyl transfer). Catalyzes the phospholipid dependent N-acylation of the N-terminal cysteine of apolipoprotein, the last step in lipoprotein maturation. This is Apolipoprotein N-acyltransferase from Neisseria meningitidis serogroup A / serotype 4A (strain DSM 15465 / Z2491).